Consider the following 357-residue polypeptide: Undecaprenyl-phosphate alpha-N-acetylglucosaminyl 1-phosphate transferase (357 aa).

A run of 7 helical transmembrane segments spans residues 40–60 (GAIPLIGGVSLFVGNLCFYLL), 64–84 (QMRLPTLYLFSIFVLLVIGMI), 124–144 (FQLTLGSIGLIITVLATIAAI), 183–203 (WSFALIIAILPYFMMNLGIPF), 209–229 (VFMGDAGSTLIGFTIIWILLL), 238–258 (MNPVTALWIIAIPLIDMIAIM), and 291–311 (FLLITFAAAICATIGILGEIF).

This sequence belongs to the glycosyltransferase 4 family. WecA subfamily. It depends on Mg(2+) as a cofactor. The cofactor is Mn(2+).

It localises to the cell inner membrane. The catalysed reaction is di-trans,octa-cis-undecaprenyl phosphate + UDP-N-acetyl-alpha-D-glucosamine = N-acetyl-alpha-D-glucosaminyl-di-trans,octa-cis-undecaprenyl diphosphate + UMP. It participates in bacterial outer membrane biogenesis; LPS O-antigen biosynthesis. Catalyzes the transfer of the GlcNAc-1-phosphate moiety from UDP-GlcNAc onto the carrier lipid undecaprenyl phosphate (C55-P), yielding GlcNAc-pyrophosphoryl-undecaprenyl (GlcNAc-PP-C55). The protein is Undecaprenyl-phosphate alpha-N-acetylglucosaminyl 1-phosphate transferase of Pasteurella multocida (strain Pm70).